The chain runs to 378 residues: Probable dihydroorotase-like protein (378 aa).

The protein belongs to the metallo-dependent hydrolases superfamily. DHOase family. PyrC' subfamily.

Non-functional DHOase. This is Probable dihydroorotase-like protein (pyrC') from Helicobacter pylori (strain J99 / ATCC 700824) (Campylobacter pylori J99).